Consider the following 829-residue polypeptide: Protein SEY1 homolog 2 (829 aa).

Positions 1 to 21 (MDEVSPTKHFTSKPLLPTKTP) are disordered. The Cytoplasmic portion of the chain corresponds to 1 to 728 (MDEVSPTKHF…EKENSEIKYQ (728 aa)). One can recognise a GB1/RHD3-type G domain in the interval 83-305 (GMDYNAVGIL…FLPQYNKEIP (223 aa)). 93-100 (GAQSSGKS) contributes to the GTP binding site. 2 coiled-coil regions span residues 372-396 (KKIM…YMES) and 576-596 (DTIE…IKEL). The chain crosses the membrane as a helical span at residues 729-749 (IPLYLIVLVIFFGFDEFIAIL). Residues 750–752 (TNP) lie on the Lumenal side of the membrane. Residues 753–773 (LLFILTLIIGGGIYIGYKLNL) form a helical membrane-spanning segment. Residues 774–829 (GGVAKNYIQYLLSMSLSSTMEYLRTIPFFTPLIDKIWPKDDNKDDDSTEETQEETK) are Cytoplasmic-facing.

The protein belongs to the TRAFAC class dynamin-like GTPase superfamily. GB1/RHD3 GTPase family. RHD3 subfamily.

It localises to the endoplasmic reticulum membrane. Functionally, probable GTP-binding protein that may be involved in cell development. The protein is Protein SEY1 homolog 2 of Entamoeba dispar (strain ATCC PRA-260 / SAW760).